The primary structure comprises 284 residues: Urease accessory protein UreD (284 aa).

The protein belongs to the UreD family. UreD, UreF and UreG form a complex that acts as a GTP-hydrolysis-dependent molecular chaperone, activating the urease apoprotein by helping to assemble the nickel containing metallocenter of UreC. The UreE protein probably delivers the nickel.

Its subcellular location is the cytoplasm. Required for maturation of urease via the functional incorporation of the urease nickel metallocenter. This Bordetella bronchiseptica (strain ATCC BAA-588 / NCTC 13252 / RB50) (Alcaligenes bronchisepticus) protein is Urease accessory protein UreD.